The following is a 330-amino-acid chain: MVPQAKLVVASLILTSALIQTSEAVGGIATYWGQYTETEEGSLAEACASNLYSYINIAYLNIFGEGRYLSLNISGHCSDCTFLGEEIKACQSQGVKIFLSLGGPYGDYHLTTDGDADRVAEQLWSSFLGGSKSTGVYQPLLGDVELDGIDLDIQIGPPEEYDVLARNLKDLTKDRTRPFYLSAAPKCSAYNDSDAYLWTAVETGLFDFVWVKFYNDTSCQYNNDTAAGLDAFYRSWYDWTVSLAEGNKLLIGIPASNETDNSPLGGYIPSDVLNDQIVSVIMTSSKFGGVNVWNRYYDLKTNYSSSIILEYVNSGTKYLPLRTKFMYQNA.

An N-terminal signal peptide occupies residues 1–24 (MVPQAKLVVASLILTSALIQTSEA). One can recognise a GH18 domain in the interval 26-330 (GGIATYWGQY…LRTKFMYQNA (305 aa)). Disulfide bonds link C47–C90, C77–C80, and C187–C219. The binds to IgE in 70% of the 10 patients tested allergic to Indian jujube and latex stretch occupies residues 72–86 (NISGHCSDCTFLGEE). Positions 292 to 301 (VWNRYYDLKT) are binds to IgE in 100% of the 10 patients tested allergic to Indian jujube and latex; sufficient for prediction of the presence of allergic reactions in these patients. Binds to IgE in 70% of the 10 patients tested allergic to Indian jujube and latex stretches follow at residues 300-311 (KTNYSSSIILEY) and 309-320 (LEYVNSGTKYLP).

This sequence belongs to the glycosyl hydrolase 18 family. Chitinase class II subfamily.

It is found in the secreted. The catalysed reaction is Random endo-hydrolysis of N-acetyl-beta-D-glucosaminide (1-&gt;4)-beta-linkages in chitin and chitodextrins.. In terms of biological role, defense against chitin containing fungal pathogens. This Ziziphus mauritiana (Indian jujube) protein is Endochitinase Ziz m 1.0101.